A 270-amino-acid chain; its full sequence is Diaminopimelate epimerase (270 aa).

N15, Q49, and N66 together coordinate substrate. C75 serves as the catalytic Proton donor. Substrate-binding positions include 76 to 77 (GN), N155, N187, and 204 to 205 (ER). The Proton acceptor role is filled by C213. 214 to 215 (GS) is a substrate binding site.

This sequence belongs to the diaminopimelate epimerase family. Homodimer.

It localises to the cytoplasm. It catalyses the reaction (2S,6S)-2,6-diaminopimelate = meso-2,6-diaminopimelate. It participates in amino-acid biosynthesis; L-lysine biosynthesis via DAP pathway; DL-2,6-diaminopimelate from LL-2,6-diaminopimelate: step 1/1. Catalyzes the stereoinversion of LL-2,6-diaminopimelate (L,L-DAP) to meso-diaminopimelate (meso-DAP), a precursor of L-lysine and an essential component of the bacterial peptidoglycan. The chain is Diaminopimelate epimerase from Rickettsia conorii (strain ATCC VR-613 / Malish 7).